A 310-amino-acid chain; its full sequence is Malate dehydrogenase (310 aa).

Residues 7–12 and Asp-32 contribute to the NAD(+) site; that span reads GAGNVG. Arg-81 and Arg-87 together coordinate substrate. Residues Asn-94 and 117 to 119 each bind NAD(+); that span reads VSN. Substrate contacts are provided by Asn-119 and Arg-150. The active-site Proton acceptor is His-174.

This sequence belongs to the LDH/MDH superfamily. MDH type 3 family. In terms of assembly, homotetramer; arranged as a dimer of dimers.

It catalyses the reaction (S)-malate + NAD(+) = oxaloacetate + NADH + H(+). In terms of biological role, catalyzes the reversible oxidation of malate to oxaloacetate. This is Malate dehydrogenase from Chlorobaculum tepidum (strain ATCC 49652 / DSM 12025 / NBRC 103806 / TLS) (Chlorobium tepidum).